A 266-amino-acid polypeptide reads, in one-letter code: Glucosamine-6-phosphate deaminase (266 aa).

Asp72 functions as the Proton acceptor; for enolization step in the catalytic mechanism. Asp141 functions as the For ring-opening step in the catalytic mechanism. The Proton acceptor; for ring-opening step role is filled by His143. Glu148 functions as the For ring-opening step in the catalytic mechanism.

It belongs to the glucosamine/galactosamine-6-phosphate isomerase family. NagB subfamily. Homohexamer.

It carries out the reaction alpha-D-glucosamine 6-phosphate + H2O = beta-D-fructose 6-phosphate + NH4(+). Its pathway is amino-sugar metabolism; N-acetylneuraminate degradation; D-fructose 6-phosphate from N-acetylneuraminate: step 5/5. With respect to regulation, allosterically activated by N-acetylglucosamine 6-phosphate (GlcNAc6P). Catalyzes the reversible isomerization-deamination of glucosamine 6-phosphate (GlcN6P) to form fructose 6-phosphate (Fru6P) and ammonium ion. This chain is Glucosamine-6-phosphate deaminase, found in Pectobacterium atrosepticum (strain SCRI 1043 / ATCC BAA-672) (Erwinia carotovora subsp. atroseptica).